The chain runs to 531 residues: CCA tRNA nucleotidyltransferase, mitochondrial (531 aa).

The protein belongs to the tRNA nucleotidyltransferase/poly(A) polymerase family.

The protein localises to the mitochondrion. It localises to the cytoplasm. It is found in the nucleus. It carries out the reaction a tRNA precursor + 2 CTP + ATP = a tRNA with a 3' CCA end + 3 diphosphate. Its function is as follows. Nucleotidyltransferase that catalyzes the addition and repair of the essential 3'-terminal CCA sequence in tRNAs, which is necessary for the attachment of amino acids to the 3' terminus of tRNA molecules, using CTP and ATP as substrates. tRNA 3'-terminal CCA addition is required both for tRNA processing and repair. Also involved in tRNA surveillance by mediating tandem CCA addition to generate a CCACCA at the 3' terminus of unstable tRNAs. While stable tRNAs receive only 3'-terminal CCA, unstable tRNAs are marked with CCACCA and rapidly degraded. The structural flexibility of RNA controls the choice between CCA versus CCACCA addition: following the first CCA addition cycle, nucleotide-binding to the active site triggers a clockwise screw motion, producing torque on the RNA. This ejects stable RNAs, whereas unstable RNAs are refolded while bound to the enzyme and subjected to a second CCA catalytic cycle. The chain is CCA tRNA nucleotidyltransferase, mitochondrial (CCA1) from Candida glabrata (strain ATCC 2001 / BCRC 20586 / JCM 3761 / NBRC 0622 / NRRL Y-65 / CBS 138) (Yeast).